Reading from the N-terminus, the 348-residue chain is tRNA N6-adenosine threonylcarbamoyltransferase (348 aa).

Residues His-116 and His-120 each coordinate Fe cation. Substrate-binding positions include 138-142, Asp-171, Gly-184, Asp-188, and Asn-277; that span reads QVSGG. Asp-309 lines the Fe cation pocket.

Belongs to the KAE1 / TsaD family. The cofactor is Fe(2+).

It localises to the cytoplasm. It carries out the reaction L-threonylcarbamoyladenylate + adenosine(37) in tRNA = N(6)-L-threonylcarbamoyladenosine(37) in tRNA + AMP + H(+). Functionally, required for the formation of a threonylcarbamoyl group on adenosine at position 37 (t(6)A37) in tRNAs that read codons beginning with adenine. Is involved in the transfer of the threonylcarbamoyl moiety of threonylcarbamoyl-AMP (TC-AMP) to the N6 group of A37, together with TsaE and TsaB. TsaD likely plays a direct catalytic role in this reaction. The polypeptide is tRNA N6-adenosine threonylcarbamoyltransferase (Lactobacillus johnsonii (strain CNCM I-12250 / La1 / NCC 533)).